A 350-amino-acid chain; its full sequence is S-adenosylmethionine:tRNA ribosyltransferase-isomerase (350 aa).

It belongs to the QueA family. As to quaternary structure, monomer.

It is found in the cytoplasm. The catalysed reaction is 7-aminomethyl-7-carbaguanosine(34) in tRNA + S-adenosyl-L-methionine = epoxyqueuosine(34) in tRNA + adenine + L-methionine + 2 H(+). It functions in the pathway tRNA modification; tRNA-queuosine biosynthesis. Transfers and isomerizes the ribose moiety from AdoMet to the 7-aminomethyl group of 7-deazaguanine (preQ1-tRNA) to give epoxyqueuosine (oQ-tRNA). The chain is S-adenosylmethionine:tRNA ribosyltransferase-isomerase from Bacillus mycoides (strain KBAB4) (Bacillus weihenstephanensis).